A 300-amino-acid chain; its full sequence is Probable L-serine dehydratase, alpha chain (300 aa).

This sequence belongs to the iron-sulfur dependent L-serine dehydratase family. In terms of assembly, heterodimer of an alpha chain and a beta chain. It depends on [4Fe-4S] cluster as a cofactor.

It carries out the reaction L-serine = pyruvate + NH4(+). It participates in carbohydrate biosynthesis; gluconeogenesis. The protein is Probable L-serine dehydratase, alpha chain (sdaAA) of Bacillus subtilis (strain 168).